The chain runs to 318 residues: Taste receptor type 2 member 7 (318 aa).

Residues 1–9 lie on the Extracellular side of the membrane; the sequence is MTDKVQTTL. A helical membrane pass occupies residues 10–30; it reads LFLAIGEFSVGILGNAFIGLV. Topologically, residues 31 to 55 are cytoplasmic; sequence NCMDWVKKRKIASIDLILTSLAISR. The chain crosses the membrane as a helical span at residues 56-76; that stretch reads ICLLCVILLDCFMLVLYPDVY. At 77–94 the chain is on the extracellular side; the sequence is ATGKQMRIIDFFWTLTNH. Residues 95–115 traverse the membrane as a helical segment; that stretch reads LSIWFATCLSIYYFFKIANFF. The Cytoplasmic segment spans residues 116–128; it reads HPLFLWMKWRIDR. A helical membrane pass occupies residues 129 to 149; the sequence is VISWILLGCMVLSVFINLPAT. Residues 150–187 are Extracellular-facing; the sequence is ENLNADFRRCVKAKRKTNLTWSCRVTKAQHASTKLFLN. N-linked (GlcNAc...) asparagine glycosylation is present at N167. The helical transmembrane segment at 188–208 threads the bilayer; sequence LVTLLPFSVCLMSFFLLILSL. Topologically, residues 209–235 are cytoplasmic; that stretch reads WRHIRRMQLSATGCRDPSTEAHVRALK. A helical membrane pass occupies residues 236–256; sequence AVISFLLLFIAYYLSFLIATS. At 257–266 the chain is on the extracellular side; it reads SYFIPETELA. The chain crosses the membrane as a helical span at residues 267 to 287; that stretch reads VIFGEFIALIYPSSHSFILIL. Residues 288 to 318 are Cytoplasmic-facing; the sequence is GNSKLRRASLKVLWTVMSILKGRKFQQHKQI.

This sequence belongs to the G-protein coupled receptor T2R family.

It is found in the membrane. In terms of biological role, gustducin-coupled receptor implicated in the perception of bitter compounds in the oral cavity and the gastrointestinal tract. Signals through PLCB2 and the calcium-regulated cation channel TRPM5. The protein is Taste receptor type 2 member 7 (TAS2R7) of Macaca mulatta (Rhesus macaque).